Consider the following 258-residue polypeptide: Putative gamma-secretase subunit APH-1C (258 aa).

7 helical membrane passes run 5–25 (VFFGCAFIAFGPAFALYLFTI), 32–52 (VIFLIAGAFFWLVSLLLSSMF), 71–91 (LLIFGALLSVCIQELFRLAYY), 116–136 (LLAYVSGLGFGIMSGVFSFVN), 161–181 (AFMTLVVIMLHVFWGVVFFDG), 187–207 (WYTLLTVLLTHLVVSTQTFLS), and 214–234 (LVTAYIIMVLMGIWAFYVAGG).

The protein belongs to the APH-1 family. As to quaternary structure, potential component of the gamma-secretase complex.

It is found in the membrane. Potential subunit of the gamma-secretase complex, an endoprotease complex that catalyzes the intramembrane cleavage of integral proteins such as Notch receptors and APP (amyloid-beta precursor protein). This is Putative gamma-secretase subunit APH-1C (Aph1c) from Mus musculus (Mouse).